Consider the following 119-residue polypeptide: Hydrogenase maturation factor HypA (119 aa).

His-2 serves as a coordination point for Ni(2+). 4 residues coordinate Zn(2+): Cys-73, Cys-76, Cys-89, and Cys-92.

The protein belongs to the HypA/HybF family.

Its function is as follows. Involved in the maturation of [NiFe] hydrogenases. Required for nickel insertion into the metal center of the hydrogenase. This is Hydrogenase maturation factor HypA from Dehalococcoides mccartyi (strain ATCC BAA-2266 / KCTC 15142 / 195) (Dehalococcoides ethenogenes (strain 195)).